The following is a 1433-amino-acid chain: Probable ATP-dependent RNA helicase spindle-E (1433 aa).

The disordered stretch occupies residues 76-98; it reads NRTLDELDSDDEEENMQEQPSVR. A compositionally biased stretch (acidic residues) spans 81–91; it reads ELDSDDEEENM. A Helicase ATP-binding domain is found at 127-294; that stretch reads MKAIRENPVV…FATSSAFPPV (168 aa). 140 to 147 serves as a coordination point for ATP; sequence GETGCGKT. Residues 240–243 carry the DEAH box motif; that stretch reads DEVH. One can recognise a Helicase C-terminal domain in the interval 354-526; it reads QSLQSYEEAK…NSVLKAKELE (173 aa). Residues 937–1000 enclose the Tudor domain; that stretch reads ASAVTKGLQL…RLMPHELKRD (64 aa).

The protein belongs to the DEAD box helicase family. DEAH subfamily.

It is found in the cytoplasm. The catalysed reaction is ATP + H2O = ADP + phosphate + H(+). Probable ATP-binding RNA helicase which plays a central role during spermatogenesis and oogenesis by repressing transposable elements and preventing their mobilization, which is essential for the germline integrity. Acts via the piRNA metabolic process, which mediates the repression of transposable elements during meiosis by forming complexes composed of piRNAs and Piwi and govern the methylation and subsequent repression of transposons. Involved in the repression of LTR retrotransposon copia. Also involved in telomere regulation by repressing specialized telomeric retroelements HeT-A, TAHRE, and TART; Drosophila telomeres being maintained by transposition of specialized telomeric retroelements. Involved in telomeric trans-silencing, a repression mechanism by which a transposon or a transgene inserted in subtelomeric heterochromatin has the capacity to repress in trans in the female germline, a homologous transposon, or transgene located in euchromatin. Involved in the repression of testis-expressed Stellate genes by the homologous Su(Ste) repeats. Required for anteroposterior and dorsoventral axis formation during oogenesis. The protein is Probable ATP-dependent RNA helicase spindle-E (spn-E) of Drosophila virilis (Fruit fly).